The primary structure comprises 303 residues: MATSRYEPVAEIGVGAYGTVYKARDPHSGHFVALKSVRVPNGGGAGGGLPISTVREVALLRRLEAFEHPNVVRLMDVCATARTDRETKVTLVFEHVDQDLRTYLDKAPPPGLPVETIKDLMRQFLRGLDFLHANCIVHRDLKPENILVTSGGTVKLADFGLARIYSYQMALTPVVVTLWYRAPEVLLQSTYATPVDMWSVGCIFAEMFRRKPLFCGNSEADQLGKIFDLIGLPPEDDWPRDVSLPRGAFSPRGPRPVQSVVPELEESGAQLLLEMLTFNPHKRISAFRALQHSYLHKAEGDAE.

Alanine 2 carries the N-acetylalanine modification. In terms of domain architecture, Protein kinase spans 6–295; the sequence is YEPVAEIGVG…AFRALQHSYL (290 aa). Residues 12–20 and lysine 35 contribute to the ATP site; that span reads IGVGAYGTV. The tract at residues 50–56 is required for binding D-type cyclins; sequence PISTVRE. Residue aspartate 140 is the Proton acceptor of the active site. Threonine 172 is subject to Phosphothreonine; by CAK.

Belongs to the protein kinase superfamily. CMGC Ser/Thr protein kinase family. CDC2/CDKX subfamily. As to quaternary structure, component of the D-CDK4 complex, composed of CDK4 and some D-type G1 cyclin (CCND1, CCND2 or CCND3). Interacts directly in the complex with CCND1, CCND2 or CCND3. Interacts with SEI1 and ZNF655. Forms a ternary complex, cyclin D-CDK4-CDKN1B, involved in modulating CDK4 enzymatic activity. Interacts directly with CDKN1B (phosphorylated on 'Tyr-88' and 'Tyr-89'); the interaction allows assembly of the cyclin D-CDK4 complex, Thr-172 phosphorylation, nuclear translocation and enhances the cyclin D-CDK4 complex activity. CDK4 activity is either inhibited or enhanced depending on stoichiometry of complex. The non-tyrosine-phosphorylated form of CDKN1B prevents T-loop phosphorylation of CDK4 producing inactive CDK4. Interacts (unphosphorylated form) with CDK2. Also forms ternary complexes with CDKN1A or CDKN2A. Interacts directly with CDKN1A (via its N-terminal); the interaction promotes the assembly of the cyclin D-CDK4 complex, its nuclear translocation and promotes the cyclin D-dependent enzyme activity of CDK4. Interacts with CCND1; the interaction is prevented with the binding of CCND1 to INSM1 during cell cycle progression. Probably forms a complex composed of chaperones HSP90 and HSP70, co-chaperones CDC37, PPP5C, TSC1 and client protein TSC2, CDK4, AKT, RAF1 and NR3C1; this complex does not contain co-chaperones STIP1/HOP and PTGES3/p23. Interacts with CEBPA (when phosphorylated). Interacts with FNIP1 and FNIP2. Post-translationally, phosphorylation at Thr-172 is required for enzymatic activity. Phosphorylated, in vitro, at this site by CCNH-CDK7, but, in vivo, appears to be phosphorylated by a proline-directed kinase. In the cyclin D-CDK4-CDKN1B complex, this phosphorylation and consequent CDK4 enzyme activity, is dependent on the tyrosine phosphorylation state of CDKN1B. Thus, in proliferating cells, CDK4 within the complex is phosphorylated on Thr-172 in the T-loop. In resting cells, phosphorylation on Thr-172 is prevented by the non-tyrosine-phosphorylated form of CDKN1B.

The protein resides in the cytoplasm. The protein localises to the nucleus. It is found in the nucleus membrane. The catalysed reaction is L-seryl-[protein] + ATP = O-phospho-L-seryl-[protein] + ADP + H(+). The enzyme catalyses L-threonyl-[protein] + ATP = O-phospho-L-threonyl-[protein] + ADP + H(+). Its activity is regulated as follows. Both phosphorylation at Thr-172 and binding of a D-type cyclin are necessary for enzymatic activity. Full activation of the cyclin-D-CDK4 complex appears to require other factors such as recruitment of the substrate via a substrate recruitment motif, and/or formation of the CDKN1B ternary complex. Inhibited by INK4 family members. In resting cells, the non-tyrosine-phosphorylated form of CDKN1B prevents phosphorylation at Thr-172 and inactivation, while, in proliferating cells, tyrosine phosphorylation of CDKN1B allows phosphorylation of Thr-172 of CDK4 and subsequent activation. Functionally, ser/Thr-kinase component of cyclin D-CDK4 (DC) complexes that phosphorylate and inhibit members of the retinoblastoma (RB) protein family including RB1 and regulate the cell-cycle during G(1)/S transition. Phosphorylation of RB1 allows dissociation of the transcription factor E2F from the RB/E2F complexes and the subsequent transcription of E2F target genes which are responsible for the progression through the G(1) phase. Hypophosphorylates RB1 in early G(1) phase. Cyclin D-CDK4 complexes are major integrators of various mitogenenic and antimitogenic signals. Also phosphorylates SMAD3 in a cell-cycle-dependent manner and represses its transcriptional activity. Component of the ternary complex, cyclin D/CDK4/CDKN1B, required for nuclear translocation and activity of the cyclin D-CDK4 complex. In Bos taurus (Bovine), this protein is Cyclin-dependent kinase 4 (CDK4).